Consider the following 246-residue polypeptide: tRNA pseudouridine synthase A (246 aa).

Asp52 (nucleophile) is an active-site residue. Tyr112 serves as a coordination point for substrate.

It belongs to the tRNA pseudouridine synthase TruA family. In terms of assembly, homodimer.

The catalysed reaction is uridine(38/39/40) in tRNA = pseudouridine(38/39/40) in tRNA. Its function is as follows. Formation of pseudouridine at positions 38, 39 and 40 in the anticodon stem and loop of transfer RNAs. The protein is tRNA pseudouridine synthase A of Pelagibacter ubique (strain HTCC1062).